The sequence spans 388 residues: Chaperone protein DnaJ (388 aa).

The J domain occupies 5 to 69; the sequence is DYYDVLGVDK…QKRAQYDQFG (65 aa). The segment at 145 to 227 adopts a CR-type zinc-finger fold; that stretch reads GKKTDITYTR…CHGQGTVDKK (83 aa). Zn(2+)-binding residues include Cys-158, Cys-161, Cys-175, Cys-178, Cys-201, Cys-204, Cys-215, and Cys-218. CXXCXGXG motif repeat units follow at residues 158 to 165, 175 to 182, 201 to 208, and 215 to 222; these read CPTCDGSG, CDKCHGSG, CDKCGGRG, and CQTCHGQG.

The protein belongs to the DnaJ family. As to quaternary structure, homodimer. Requires Zn(2+) as cofactor.

The protein resides in the cytoplasm. Participates actively in the response to hyperosmotic and heat shock by preventing the aggregation of stress-denatured proteins and by disaggregating proteins, also in an autonomous, DnaK-independent fashion. Unfolded proteins bind initially to DnaJ; upon interaction with the DnaJ-bound protein, DnaK hydrolyzes its bound ATP, resulting in the formation of a stable complex. GrpE releases ADP from DnaK; ATP binding to DnaK triggers the release of the substrate protein, thus completing the reaction cycle. Several rounds of ATP-dependent interactions between DnaJ, DnaK and GrpE are required for fully efficient folding. Also involved, together with DnaK and GrpE, in the DNA replication of plasmids through activation of initiation proteins. The chain is Chaperone protein DnaJ from Lactobacillus johnsonii (strain CNCM I-12250 / La1 / NCC 533).